Reading from the N-terminus, the 436-residue chain is Eukaryotic peptide chain release factor subunit 1 (436 aa).

Belongs to the eukaryotic release factor 1 family. In terms of assembly, heterodimer of two subunits, one of which binds GTP.

The protein resides in the cytoplasm. In terms of biological role, directs the termination of nascent peptide synthesis (translation) in response to the termination codons UAA and possibly also UAG and UGA. This is Eukaryotic peptide chain release factor subunit 1 (eRF1) from Dileptus margaritifer (Ciliate).